Consider the following 240-residue polypeptide: MKILLIGYGAMNQRVARLAEEKGHEIVGVIENTPKATTPYQQYQHIADVKGADVAIDFSNPNLLFPLLDEDFHLPLVVATTGEKEKLLNKLDELSQNMPVFFSANMSYGVHALTKILAAAVPLLDDFDIELTEAHHNKKVDAPSGTLEKLYDVIVSLKENVTPVYDRHELNEKRQPQDIGIHSIRGGTIVGEHEVLFAGTDETIQITHRAQSKDIFANGAIQAAERLVNKPNGFYTFDNL.

Residues 79–81 and 103–106 contribute to the NAD(+) site; these read ATT and SANM. His135 acts as the Proton donor/acceptor in catalysis. Residue His136 participates in (S)-2,3,4,5-tetrahydrodipicolinate binding. Lys139 functions as the Proton donor in the catalytic mechanism. 145-146 is a (S)-2,3,4,5-tetrahydrodipicolinate binding site; it reads GT.

Belongs to the DapB family.

The protein resides in the cytoplasm. It catalyses the reaction (S)-2,3,4,5-tetrahydrodipicolinate + NAD(+) + H2O = (2S,4S)-4-hydroxy-2,3,4,5-tetrahydrodipicolinate + NADH + H(+). The catalysed reaction is (S)-2,3,4,5-tetrahydrodipicolinate + NADP(+) + H2O = (2S,4S)-4-hydroxy-2,3,4,5-tetrahydrodipicolinate + NADPH + H(+). The protein operates within amino-acid biosynthesis; L-lysine biosynthesis via DAP pathway; (S)-tetrahydrodipicolinate from L-aspartate: step 4/4. Functionally, catalyzes the conversion of 4-hydroxy-tetrahydrodipicolinate (HTPA) to tetrahydrodipicolinate. The protein is 4-hydroxy-tetrahydrodipicolinate reductase of Staphylococcus aureus (strain USA300).